A 199-amino-acid chain; its full sequence is Ras-related protein Rab-7b (199 aa).

Residues 15-22 (GAIGVGKT), 34-40 (YEEYQTT), 63-67 (DTGGQ), 124-127 (NKID), and 154-155 (AK) each bind GTP. 2 consecutive short sequence motifs (switch) follow at residues 28-41 (YVHK…QTTL) and 67-82 (QERF…KGSD). Serine 186 is modified (phosphoserine). Residues cysteine 198 and cysteine 199 are each lipidated (S-geranylgeranyl cysteine).

It belongs to the small GTPase superfamily. Rab family. As to expression, expressed in heart, placenta, lung, skeletal muscle and peripheral blood leukocyte.

The protein localises to the late endosome. It localises to the lysosome. The protein resides in the golgi apparatus. Its subcellular location is the trans-Golgi network. It is found in the cytoplasmic vesicle. The protein localises to the phagosome. It localises to the phagosome membrane. Functionally, controls vesicular trafficking from endosomes to the trans-Golgi network (TGN). Acts as a negative regulator of TLR9 signaling and can suppress TLR9-triggered TNFA, IL6, and IFNB production in macrophages by promoting TLR9 lysosomal degradation. Also negatively regulates TLR4 signaling in macrophages by promoting lysosomal degradation of TLR4. Promotes megakaryocytic differentiation by increasing NF-kappa-B-dependent IL6 production and subsequently enhancing the association of STAT3 with GATA1. Not involved in the regulation of the EGF- and EGFR degradation pathway. In Homo sapiens (Human), this protein is Ras-related protein Rab-7b (RAB7B).